Reading from the N-terminus, the 490-residue chain is MSATLFDPKSIAVSNPVDTSTQASLAHASQPTGQAKKKVYIATQGCQMNVYDSEKMGNVLGDSHDMVVTDNIEEADVLLMNTCSIREKAQEKVFSELGRWRKLKEEKPDLVIGVGGCVASQEGDNIQKRAPYVDMVFGPQTLHRLPELYDKSTTQRNVKPKDRIGTVDVSFPSIEKFDFLPEPKVEGYRAFVSIMEGCSKYCSFCVVPYTRGEELSRPLDDVLAEIDSLAEQGVREITLLGQNVNGYRGEKDDGSICRFAELLHYVAHVDGIERIRYTTSHPLEFTDDIIEAYAKLPQLVSHLHLPVQSGSNKILAAMKRNHTIDVYINQINKLMAVRPDMHLSSDFIIGFPGETEEDFLDTLNLAKALDFDHSYSFIYSKRPGTPASELPDDVSLATKKERLAIFQKVIRDSTLKKTEEMVGKTLRVMVEEIADRYPDQLLGTADNTRSVLFKATEQQKTDLMGKFVTVKITDFVSPHMVRGELVDILD.

One can recognise an MTTase N-terminal domain in the interval 37-154; the sequence is KKVYIATQGC…LPELYDKSTT (118 aa). [4Fe-4S] cluster is bound by residues Cys46, Cys83, Cys117, Cys198, Cys202, and Cys205. In terms of domain architecture, Radical SAM core spans 184–416; the sequence is KVEGYRAFVS…QKVIRDSTLK (233 aa). The 69-residue stretch at 419-487 folds into the TRAM domain; it reads EEMVGKTLRV…PHMVRGELVD (69 aa).

The protein belongs to the methylthiotransferase family. MiaB subfamily. As to quaternary structure, monomer. [4Fe-4S] cluster serves as cofactor.

The protein resides in the cytoplasm. The enzyme catalyses N(6)-dimethylallyladenosine(37) in tRNA + (sulfur carrier)-SH + AH2 + 2 S-adenosyl-L-methionine = 2-methylsulfanyl-N(6)-dimethylallyladenosine(37) in tRNA + (sulfur carrier)-H + 5'-deoxyadenosine + L-methionine + A + S-adenosyl-L-homocysteine + 2 H(+). Catalyzes the methylthiolation of N6-(dimethylallyl)adenosine (i(6)A), leading to the formation of 2-methylthio-N6-(dimethylallyl)adenosine (ms(2)i(6)A) at position 37 in tRNAs that read codons beginning with uridine. The polypeptide is tRNA-2-methylthio-N(6)-dimethylallyladenosine synthase (Psychrobacter sp. (strain PRwf-1)).